A 344-amino-acid polypeptide reads, in one-letter code: Dihydroorotase (344 aa).

Zn(2+) contacts are provided by His14 and His16. Substrate contacts are provided by residues 16-18 and Asn42; that span reads HLR. Lys100, His137, and His175 together coordinate Zn(2+). An N6-carboxylysine modification is found at Lys100. His137 serves as a coordination point for substrate. Leu220 lines the substrate pocket. Zn(2+) is bound at residue Asp248. Asp248 is a catalytic residue. Residues His252 and Ala264 each contribute to the substrate site.

This sequence belongs to the metallo-dependent hydrolases superfamily. DHOase family. Class II DHOase subfamily. In terms of assembly, homodimer. It depends on Zn(2+) as a cofactor.

The enzyme catalyses (S)-dihydroorotate + H2O = N-carbamoyl-L-aspartate + H(+). It functions in the pathway pyrimidine metabolism; UMP biosynthesis via de novo pathway; (S)-dihydroorotate from bicarbonate: step 3/3. Catalyzes the reversible cyclization of carbamoyl aspartate to dihydroorotate. This is Dihydroorotase from Ralstonia pickettii (strain 12J).